The chain runs to 211 residues: Histidine biosynthesis bifunctional protein HisIE (211 aa).

Positions 1–122 are phosphoribosyl-AMP cyclohydrolase; the sequence is MSFKTAEVSS…DPQEESQMVW (122 aa). The phosphoribosyl-ATP pyrophosphohydrolase stretch occupies residues 123-211; the sequence is LHQLEQLLAA…VINKLKERHK (89 aa).

This sequence in the N-terminal section; belongs to the PRA-CH family. The protein in the C-terminal section; belongs to the PRA-PH family.

It is found in the cytoplasm. It catalyses the reaction 1-(5-phospho-beta-D-ribosyl)-ATP + H2O = 1-(5-phospho-beta-D-ribosyl)-5'-AMP + diphosphate + H(+). The enzyme catalyses 1-(5-phospho-beta-D-ribosyl)-5'-AMP + H2O = 1-(5-phospho-beta-D-ribosyl)-5-[(5-phospho-beta-D-ribosylamino)methylideneamino]imidazole-4-carboxamide. Its pathway is amino-acid biosynthesis; L-histidine biosynthesis; L-histidine from 5-phospho-alpha-D-ribose 1-diphosphate: step 2/9. The protein operates within amino-acid biosynthesis; L-histidine biosynthesis; L-histidine from 5-phospho-alpha-D-ribose 1-diphosphate: step 3/9. The chain is Histidine biosynthesis bifunctional protein HisIE from Vibrio vulnificus (strain CMCP6).